The following is a 500-amino-acid chain: Centrosomal protein of 57 kDa (500 aa).

Residues 1–16 (MAAASVSAASDSQFSS) are compositionally biased toward low complexity. Residues 1–59 (MAAASVSAASDSQFSSVLAEPSRSNGNMVRHSSSPYVLYPPDKPFLNSDLRRSPNKPTF) are disordered. The span at 22 to 35 (SRSNGNMVRHSSSP) shows a compositional bias: polar residues. Residue serine 53 is modified to Phosphoserine. The interval 58-239 (TFAYPESNSR…RAAELQSGLE (182 aa)) is centrosome localization domain (CLD). Residues 63 to 242 (ESNSRAIFSA…ELQSGLEANR (180 aa)) adopt a coiled-coil conformation. Disordered stretches follow at residues 256 to 275 (STRKIKKKKSKPPEKKGSRT) and 432 to 478 (QKKE…RKNL). Residues 278-491 (GAQPHYRLCL…KDMQTIQNSL (214 aa)) form a mediates interaction with microtubules region. Residues 389–449 (TVELKDNLEC…KKTLDEEGNS (61 aa)) adopt a coiled-coil conformation. Basic and acidic residues-rich tracts occupy residues 432–444 (QKKELKANKKTLD) and 461–475 (SKKDLAKQRPGEKSR).

It belongs to the translokin family. Interacts with FGF2 and RAP80. Does not interact with FGF1 or FGF2 isoform 24 kDa. Homodimer and homooligomer. Interacts with microtubules. In terms of tissue distribution, ubiquitous (at protein level). Expressed in testis, predominantly in round spermatids. Low expression is detected in other tissues.

It is found in the nucleus. Its subcellular location is the cytoplasm. The protein localises to the cytoskeleton. It localises to the microtubule organizing center. The protein resides in the centrosome. Functionally, centrosomal protein which may be required for microtubule attachment to centrosomes. May act by forming ring-like structures around microtubules. Mediates nuclear translocation and mitogenic activity of the internalized growth factor FGF2. This is Centrosomal protein of 57 kDa (Cep57) from Mus musculus (Mouse).